A 2145-amino-acid chain; its full sequence is U5 small nuclear ribonucleoprotein 200 kDa helicase (2145 aa).

Disordered regions lie at residues 54 to 82 and 202 to 243; these read GDRAIKGKAPVQDQKKKRKKKDDEKAQQF and DSDE…GDGH. Positions 220–231 are enriched in acidic residues; it reads SEEESEEEEGVD. The Helicase ATP-binding 1 domain maps to 484–667; it reads DSALRSKEHL…FLRVKPEHLH (184 aa). 497 to 504 contacts ATP; that stretch reads APTGAGKT. The DEAH box signature appears at 609–612; sequence DEIH. Positions 677 to 894 constitute a Helicase C-terminal domain; the sequence is PLEQQYIGVT…QMVSRLTDML (218 aa). Residues 975-1278 enclose the SEC63 1 domain; the sequence is TELGRIASHF…IGAETVLPIS (304 aa). Residues 1331 to 1506 form the Helicase ATP-binding 2 domain; sequence RTVFESNENV…WLGCSASATF (176 aa). An ATP-binding site is contributed by 1344 to 1351; that stretch reads APNGSGKT. Positions 1448–1451 match the DEAH box motif; it reads DDLH. The SEC63 2 domain maps to 1812 to 2124; sequence LNLGMIASYY…YLGADQEFDV (313 aa).

Belongs to the helicase family. SKI2 subfamily.

Its subcellular location is the nucleus. It carries out the reaction ATP + H2O = ADP + phosphate + H(+). Functionally, catalyzes the ATP-dependent unwinding of U4/U6 RNA duplices, an essential step in the assembly of a catalytically active spliceosome. Plays a role in pre-mRNA splicing. The polypeptide is U5 small nuclear ribonucleoprotein 200 kDa helicase (Caenorhabditis elegans).